Here is a 325-residue protein sequence, read N- to C-terminus: Solute-binding protein Bpro_4736 (325 aa).

The first 27 residues, 1-27 (MKTRTLKVLKPTLALLLAASFSAGALA), serve as a signal peptide directing secretion. 168-173 (RISPVY) is a phenylglyoxylate binding site.

Belongs to the bacterial solute-binding protein 7 family. In terms of assembly, the complex is comprised of an extracytoplasmic solute-binding protein and a heteromeric permease formed by two transmembrane proteins.

It localises to the periplasm. Functionally, solute-binding protein that binds phenylglyoxylate (in vitro). Probably part of a tripartite ATP-independent periplasmic (TRAP) transport system that mediates solute transport into the cytoplasm. This chain is Solute-binding protein Bpro_4736, found in Polaromonas sp. (strain JS666 / ATCC BAA-500).